Here is a 281-residue protein sequence, read N- to C-terminus: 2,3,4,5-tetrahydropyridine-2,6-dicarboxylate N-succinyltransferase (281 aa).

Substrate is bound by residues R108 and D145.

This sequence belongs to the transferase hexapeptide repeat family. In terms of assembly, homotrimer.

Its subcellular location is the cytoplasm. The enzyme catalyses (S)-2,3,4,5-tetrahydrodipicolinate + succinyl-CoA + H2O = (S)-2-succinylamino-6-oxoheptanedioate + CoA. It functions in the pathway amino-acid biosynthesis; L-lysine biosynthesis via DAP pathway; LL-2,6-diaminopimelate from (S)-tetrahydrodipicolinate (succinylase route): step 1/3. This is 2,3,4,5-tetrahydropyridine-2,6-dicarboxylate N-succinyltransferase from Bradyrhizobium diazoefficiens (strain JCM 10833 / BCRC 13528 / IAM 13628 / NBRC 14792 / USDA 110).